Reading from the N-terminus, the 545-residue chain is E3 ubiquitin-protein ligase ipaH9.8 (545 aa).

Residues Met-1–Met-242 form an interaction with target proteins region. LRR repeat units lie at residues Asn-57–Ala-77, Gln-78–Leu-99, Lys-100–Pro-117, Ala-118–Leu-139, Leu-140–Gln-157, Ala-158–Asn-179, Val-182–Leu-203, and Asn-205–Thr-228. The linker stretch occupies residues Ser-243–Leu-250. An E3 ubiquitin-protein ligase catalytic domain region spans residues His-251–Ser-545. An NEL domain is found at Pro-253–Ser-545. Cys-337 functions as the Glycyl thioester intermediate in the catalytic mechanism.

The protein belongs to the LRR-containing bacterial E3 ligase family. As to quaternary structure, also interacts with human and mouse U2AF1 (U2AF35). Ubiquitinated in the presence of host E1 ubiquitin-activating enzyme, E2 ubiquitin-conjugating enzyme and ubiquitin.

The protein localises to the secreted. Its subcellular location is the host cytoplasm. The protein resides in the host nucleus. The catalysed reaction is S-ubiquitinyl-[E2 ubiquitin-conjugating enzyme]-L-cysteine + [acceptor protein]-L-lysine = [E2 ubiquitin-conjugating enzyme]-L-cysteine + N(6)-ubiquitinyl-[acceptor protein]-L-lysine.. With respect to regulation, exists in an autoinhibited state in the absence of substrate protein, due to interactions of the leucine-rich repeats with NEL domain. Is activated upon binding to a substrate protein. Its function is as follows. Effector E3 ubiquitin ligase that interferes with host's ubiquitination pathway and modulates the acute inflammatory responses, thus facilitating bacterial colonization within the host cell. Interacts with IKBKG (NEMO) and TNIP1 (ABIN-1), a ubiquitin-binding adapter protein, which results in TNIP1-dependent 'Lys-27'-linked polyubiquitination of IKBKG. Consequently, polyubiquitinated IKBKG undergoes proteasome-dependent degradation, which perturbs NF-kappa-B activation during bacterial infection. Mediates polyubiquitination of host U2AF1, leading to its proteasomal degradation. Catalyzes 'Lys-48'-linked polyubiquitination and subsequent degradation of a subset of host guanylate-binding proteins (GBP1, GBP2, GBP4 and GBP6), thereby suppressing host cell defense. In contrast, host GBP3 and GBP7 are not ubiquitinated by IpaH9.8. Uses UBE2D2 (UBCH5B) as an E2 ubiquitin-conjugating enzyme. The chain is E3 ubiquitin-protein ligase ipaH9.8 (ipaH9.8) from Shigella flexneri serotype X (strain 2002017).